Here is a 159-residue protein sequence, read N- to C-terminus: Large ribosomal subunit protein uL15 (159 aa).

The segment covering 1-13 (MRLNELRDNDGAT) has biased composition (basic and acidic residues). A disordered region spans residues 1 to 41 (MRLNELRDNDGATKIRTRVGRGIGSGKGKTGGRGVKGQKSR). The span at 21-35 (RGIGSGKGKTGGRGV) shows a compositional bias: gly residues.

Belongs to the universal ribosomal protein uL15 family. In terms of assembly, part of the 50S ribosomal subunit.

In terms of biological role, binds to the 23S rRNA. The chain is Large ribosomal subunit protein uL15 from Maricaulis maris (strain MCS10) (Caulobacter maris).